A 136-amino-acid chain; its full sequence is MESFVAMKVVCIVLLFVIAAEAASTGKNPVGDAPNGKKNNITFNFPPYVPNHHAFASSLWKLCEESTPKPEMKIVDSRTTYTRRINDLQVNFKDCTFLCKRRFDNVTLDLPKNTPCGPKNQTCENKDQCVPHIPGC.

The first 22 residues, methionine 1–alanine 22, serve as a signal peptide directing secretion. Residue asparagine 105 is glycosylated (N-linked (GlcNAc...) asparagine). Residues glycine 117–cysteine 136 form a CD4-binding region.

This sequence belongs to the salp15 family. In terms of assembly, interacts with host CD4. Interacts with host DC-SIGN (CD209). Interacts with Borrelia outer surface protein C (OspC). In terms of tissue distribution, expressed in salivary glands. Detected in fed adult female.

It is found in the secreted. Functionally, salivary tick protein that downregulates host immune system by binding to both dendritic cells, and CD4(+) T cells. Specifically binds to the CD4 coreceptor on T cells. This interaction prevents the activation of the Src kinase, Lck, and its downstream substrate Zap-70, and results in deficient activation of PLCgamma1, the repression of calcium fluxes triggered by T-cell antigen receptor (TCR) ligation, and a subsequent reduction in interleukin-2 production. This salivary protein also binds to DC-SIGN (CD209) on dendritic cells (DC) and activates the Raf-1 kinase/MEK signaling pathway that results in down-regulating expression of pro-inflammatory cytokines. Furthermore, it inhibits T cell proliferation induced by DCs. In addition, it inhibits in vitro keratinocyte inflammation induced by Borrelia burgdorferi or by the major outer surface protein (OspC) of Borrelia. In addition, it downregulates chemokines and monocyte chemoattractant protein 1, as well as several antimicrobial peptides such as defensins, cathelicidin, psoriasin, and RNase 7. Apart from its immunomodulatory activities, it is also associated with protection of Borrelia spirochetes from antibody-mediated killing through its binding to OspC. In vivo, tests on different immune disease animal models show promising therapeutic results, e.g., in inhibiting HIV infection, experimental autoimmune encephalomyelitis, transplantation rejection, and asthma. In Ixodes ricinus (Common tick), this protein is Salivary protein 15 Iric-2.